Consider the following 427-residue polypeptide: Tol-Pal system protein TolB (427 aa).

Positions 1–25 (MKTFAQLRLLLAAAALALLSFSAQA) are cleaved as a signal peptide.

The protein belongs to the TolB family. As to quaternary structure, the Tol-Pal system is composed of five core proteins: the inner membrane proteins TolA, TolQ and TolR, the periplasmic protein TolB and the outer membrane protein Pal. They form a network linking the inner and outer membranes and the peptidoglycan layer.

It localises to the periplasm. Part of the Tol-Pal system, which plays a role in outer membrane invagination during cell division and is important for maintaining outer membrane integrity. This is Tol-Pal system protein TolB from Azoarcus sp. (strain BH72).